We begin with the raw amino-acid sequence, 334 residues long: Probable fructose-bisphosphate aldolase class 1 (334 aa).

The protein belongs to the class I fructose-bisphosphate aldolase family.

The catalysed reaction is beta-D-fructose 1,6-bisphosphate = D-glyceraldehyde 3-phosphate + dihydroxyacetone phosphate. It participates in carbohydrate degradation; glycolysis; D-glyceraldehyde 3-phosphate and glycerone phosphate from D-glucose: step 4/4. The sequence is that of Probable fructose-bisphosphate aldolase class 1 from Xylella fastidiosa (strain 9a5c).